The following is a 244-amino-acid chain: Orotidine 5'-phosphate decarboxylase (244 aa).

Residues Asp-20, Lys-42, 70 to 79 (DLKFFDIPAT), Thr-125, Arg-186, Gln-195, Gly-215, and Arg-216 contribute to the substrate site. Lys-72 (proton donor) is an active-site residue.

Belongs to the OMP decarboxylase family. Type 1 subfamily. Homodimer.

It catalyses the reaction orotidine 5'-phosphate + H(+) = UMP + CO2. It participates in pyrimidine metabolism; UMP biosynthesis via de novo pathway; UMP from orotate: step 2/2. In terms of biological role, catalyzes the decarboxylation of orotidine 5'-monophosphate (OMP) to uridine 5'-monophosphate (UMP). The polypeptide is Orotidine 5'-phosphate decarboxylase (Xylella fastidiosa (strain M23)).